A 104-amino-acid chain; its full sequence is Zinc-containing ferredoxin-1 (104 aa).

The segment at 2–37 (GIDPNYRTNRQVVGEHSGHKVYGPVEPPKVLGIHGT) is N-terminal extension. Residues histidine 17 and histidine 20 each contribute to the Zn(2+) site. At lysine 30 the chain carries N6-methyllysine. Histidine 35 provides a ligand contact to Zn(2+). 4Fe-4S ferredoxin-type domains lie at 38–66 (IVGVDFDLCIADGSCINACPVNVFQWYDT) and 75–104 (KADPVNEQACIFCMACVNVCPVAAIDVKPP). Residues cysteine 46 and cysteine 52 each contribute to the [3Fe-4S] cluster site. Cysteine 56 lines the [4Fe-4S] cluster pocket. Aspartate 77 is a Zn(2+) binding site. [4Fe-4S] cluster contacts are provided by cysteine 84, cysteine 87, and cysteine 90. Cysteine 94 serves as a coordination point for [3Fe-4S] cluster.

[3Fe-4S] cluster is required as a cofactor. Requires [4Fe-4S] cluster as cofactor. It depends on Zn(2+) as a cofactor.

Ferredoxins are iron-sulfur proteins that transfer electrons in a wide variety of metabolic reactions. This is Zinc-containing ferredoxin-1 (zfx1) from Sulfurisphaera tokodaii (strain DSM 16993 / JCM 10545 / NBRC 100140 / 7) (Sulfolobus tokodaii).